A 359-amino-acid chain; its full sequence is Protein RecA (359 aa).

74–81 (GPESSGKT) contributes to the ATP binding site.

It belongs to the RecA family.

It localises to the cytoplasm. Functionally, can catalyze the hydrolysis of ATP in the presence of single-stranded DNA, the ATP-dependent uptake of single-stranded DNA by duplex DNA, and the ATP-dependent hybridization of homologous single-stranded DNAs. It interacts with LexA causing its activation and leading to its autocatalytic cleavage. In Anaplasma marginale (strain St. Maries), this protein is Protein RecA.